A 231-amino-acid polypeptide reads, in one-letter code: Lipoprotein-releasing system ATP-binding protein LolD 2 (231 aa).

One can recognise an ABC transporter domain in the interval 6 to 230 (VEARSLSKSF…DGRLVGQDPA (225 aa)). 42–49 (GPSGSGKS) provides a ligand contact to ATP.

This sequence belongs to the ABC transporter superfamily. Lipoprotein translocase (TC 3.A.1.125) family. As to quaternary structure, the complex is composed of two ATP-binding proteins (LolD) and two transmembrane proteins (LolC and LolE).

It localises to the cell inner membrane. In terms of biological role, part of the ABC transporter complex LolCDE involved in the translocation of mature outer membrane-directed lipoproteins, from the inner membrane to the periplasmic chaperone, LolA. Responsible for the formation of the LolA-lipoprotein complex in an ATP-dependent manner. In Rhodospirillum rubrum (strain ATCC 11170 / ATH 1.1.1 / DSM 467 / LMG 4362 / NCIMB 8255 / S1), this protein is Lipoprotein-releasing system ATP-binding protein LolD 2.